Reading from the N-terminus, the 156-residue chain is Arginine repressor (156 aa).

It belongs to the ArgR family.

The protein localises to the cytoplasm. It participates in amino-acid biosynthesis; L-arginine biosynthesis [regulation]. In terms of biological role, regulates arginine biosynthesis genes. This is Arginine repressor from Photobacterium profundum (strain SS9).